The following is a 930-amino-acid chain: MKLKETLNLGKTDFPMRAGLPTKEPVWQKEWEEAKLYQRRQELNQGKPHFTLHDGPPYANGNIHVGHAMNKISKDIIVRSKSMSGFYAPYIPGWDTHGLPIEQVLAKQGVKRKEMDLVEYLKLCREYALSQVDKQREDFKRLGVSGDWENPYVTLTPDYEAAQIRVFGEMAKKGYIYRGAKPVYWSWSSESALAEAEIEYHDLLSTSLYYANRVKDGKGVLDTDTYIVVWTTTPFTITASRGLTVGADIDYVLVQPAGESRKFVVASELLNSLSEKFGWADVQVLATYRGQELNHIVTVHPWDTAVDELVILGDHVTTDSGTGIVHTAPGFGEDDYNVGVANGLEVAVTVNERGIMMENAGPEFAGQFYDKVVPTVIEKLGDLLLAQEEISHSYPFDWRTKKPIIWRAVPQWFASVSKFRQEILDEIEKVKFHSEWGKVRLYNMIRDRGDWVISRQRAWGVPLPIFYAEDGTPIMTVETIEHVAQLFEEHGSIIWWERDAKDLLPEGFTHPGSPNGEFKKETDIMDVWFDSGSSWNGVVVNRPELKYPADLYLEGSDQYRGWFNSSLITSVANHGVAPYKQILSQGFALDGKGEKMSKSLGNTIAPSDVEKQFGAEILRLWVTSVDSSNDVRISMDILSQVSETYRKIRNTLRFLIANTSDFNPAEDTVAYEELRSVDKYMTVRFNQLVKTIRDAYADFEFLTIYKALVNFINVDLSAFYLDFAKDVVYIEGAKSLERRQMQTVFYDILVKITKLLTPILPHTAEEIWSYLEFEAEDFVQLSELPEAETFANQEEILNTWAAFMDFRGQAQKALEEARNAKVIGKSLEAHLTIYPNEVVKTLLGAVDSNVAQLLIVSELTIAEGGAPEGAVSFEDVAFTVERAAGEVCDRCRRIDPTTAERNYHAVICDHCASIVEENFADAVAEGFETK.

A 'HIGH' region motif is present at residues proline 57–histidine 67. Glutamate 554 is a binding site for L-isoleucyl-5'-AMP. The 'KMSKS' region motif lies at lysine 595–serine 599. Lysine 598 is an ATP binding site. The Zn(2+) site is built by cysteine 888, cysteine 891, cysteine 908, and cysteine 911.

This sequence belongs to the class-I aminoacyl-tRNA synthetase family. IleS type 1 subfamily. In terms of assembly, monomer. The cofactor is Zn(2+).

It localises to the cytoplasm. The enzyme catalyses tRNA(Ile) + L-isoleucine + ATP = L-isoleucyl-tRNA(Ile) + AMP + diphosphate. Functionally, catalyzes the attachment of isoleucine to tRNA(Ile). As IleRS can inadvertently accommodate and process structurally similar amino acids such as valine, to avoid such errors it has two additional distinct tRNA(Ile)-dependent editing activities. One activity is designated as 'pretransfer' editing and involves the hydrolysis of activated Val-AMP. The other activity is designated 'posttransfer' editing and involves deacylation of mischarged Val-tRNA(Ile). This Streptococcus gordonii (strain Challis / ATCC 35105 / BCRC 15272 / CH1 / DL1 / V288) protein is Isoleucine--tRNA ligase.